We begin with the raw amino-acid sequence, 129 residues long: Glycine cleavage system H protein (129 aa).

A Lipoyl-binding domain is found at 24–106 (TYTVGITEHA…YTGGWIFKIK (83 aa)). Lys-65 is subject to N6-lipoyllysine.

The protein belongs to the GcvH family. As to quaternary structure, the glycine cleavage system is composed of four proteins: P, T, L and H. (R)-lipoate serves as cofactor.

Functionally, the glycine cleavage system catalyzes the degradation of glycine. The H protein shuttles the methylamine group of glycine from the P protein to the T protein. The chain is Glycine cleavage system H protein from Salmonella choleraesuis (strain SC-B67).